An 823-amino-acid polypeptide reads, in one-letter code: Putative ankyrin repeat domain-containing protein 20A2 (823 aa).

ANK repeat units lie at residues 66–95 (QHRTALHLACASGHVQVVTLLVNRKCQIDV), 99–128 (ENRTPLIQAVHCQEEACAVILLEHGANPNL), 132–161 (YGNTALHYAVYSESTSLAEKLLSHGAHIEA), 165–194 (DNNTPLLFAIICKKEKMVEFLLKRKASSHA), and 198–227 (LRRSALMLAVYYDSPGIVNILLKQNIDVFA). Disordered stretches follow at residues 301–343 (VPEK…EVED) and 355–402 (VQTL…LSEN). Residues 372–384 (QERHERSEKKQPQ) show a composition bias toward basic and acidic residues. Coiled-coil stretches lie at residues 431–480 (KKLK…KQLE), 565–724 (EMIT…NNST), and 776–805 (LVLEEKSKKLMNECDHLKESLFQYEREKTE).

The sequence is that of Putative ankyrin repeat domain-containing protein 20A2 from Homo sapiens (Human).